The primary structure comprises 289 residues: Secretory carrier-associated membrane protein (289 aa).

The tract at residues 1–65 (MAGRYDPNPF…TSTDGKKKER (65 aa)) is disordered. Residues 1-123 (MAGRYDPNPF…EIPIHLRTLQ (123 aa)) are Cytoplasmic-facing. Polar residues predominate over residues 16-31 (NPFSNPRSAASATNSR). The stretch at 59–98 (DGKKKERDLQAKEAELRKREQEVRRKEEAIARAGIVIEEK) forms a coiled coil. 4 helical membrane-spanning segments follow: residues 124–144 (YVAFFSLLGLVLCLTWNVVSV), 156–176 (IWFLAIIYFIAGVPGAYALWY), 191–211 (FGWFFMFYLLHIGFCILAAVA), and 239–259 (IFYFIGFGFFCLETLISIWVI). Residues 260 to 289 (QQVYMHFRGGGKTAEMKREAALGAMGAALR) lie on the Cytoplasmic side of the membrane.

This sequence belongs to the SCAMP family.

The protein resides in the cell membrane. It localises to the cytoplasmic vesicle. It is found in the secretory vesicle membrane. In terms of biological role, probably involved in membrane trafficking. The sequence is that of Secretory carrier-associated membrane protein (PSAM2) from Pisum sativum (Garden pea).